A 312-amino-acid chain; its full sequence is MNWTELSIIINHEAVELATNILENHGSNGVVIEDSDGLINQPEDKYGEIYALKKEDYPDKGVRLKAYFNEMTYDDKLRQQIKDELLNLDELDQHNVQFSEQIIAETDWENEWKNYFHPFRASKKFTIVPSWETYAKEADEELCIELDPGMAFGTGDHPTTSMCLKAIETYVLPQHSVIDVGTGSGILSIASHLIGVKRIKALDIDEMAVSVAKENFRRNHCETLIEAVPGNLLKDETEKFDIVIANILAHIIDEMIEDAYNTLNEGGYFITSGIIKEKYEGIQSHMERVGFKIISEQHDNGWVCLVGQKVSE.

Thr-160, Gly-181, Asp-203, and Asn-246 together coordinate S-adenosyl-L-methionine.

The protein belongs to the methyltransferase superfamily. PrmA family.

Its subcellular location is the cytoplasm. The enzyme catalyses L-lysyl-[protein] + 3 S-adenosyl-L-methionine = N(6),N(6),N(6)-trimethyl-L-lysyl-[protein] + 3 S-adenosyl-L-homocysteine + 3 H(+). Its function is as follows. Methylates ribosomal protein L11. This Staphylococcus aureus (strain COL) protein is Ribosomal protein L11 methyltransferase.